Reading from the N-terminus, the 492-residue chain is GTPase Der (492 aa).

2 EngA-type G domains span residues Pro-3–Val-166 and Ile-205–Thr-378. Residues Gly-9–Ser-16, Asp-56–Ile-60, Asn-118–Asp-121, Gly-211–Ser-218, Asp-258–Val-262, and Asn-323–Asp-326 contribute to the GTP site. The KH-like domain maps to Arg-379–Ala-463.

Belongs to the TRAFAC class TrmE-Era-EngA-EngB-Septin-like GTPase superfamily. EngA (Der) GTPase family. Associates with the 50S ribosomal subunit.

Its function is as follows. GTPase that plays an essential role in the late steps of ribosome biogenesis. This chain is GTPase Der, found in Cronobacter sakazakii (strain ATCC BAA-894) (Enterobacter sakazakii).